The following is a 125-amino-acid chain: Large ribosomal subunit protein bL12 (125 aa).

This sequence belongs to the bacterial ribosomal protein bL12 family. As to quaternary structure, homodimer. Part of the ribosomal stalk of the 50S ribosomal subunit. Forms a multimeric L10(L12)X complex, where L10 forms an elongated spine to which 2 to 4 L12 dimers bind in a sequential fashion. Binds GTP-bound translation factors.

In terms of biological role, forms part of the ribosomal stalk which helps the ribosome interact with GTP-bound translation factors. Is thus essential for accurate translation. This is Large ribosomal subunit protein bL12 from Ruegeria sp. (strain TM1040) (Silicibacter sp.).